The following is a 427-amino-acid chain: Serine--tRNA ligase (427 aa).

L-serine is bound at residue Thr-233–Glu-235. Arg-264 to Glu-266 is an ATP binding site. Glu-287 contacts L-serine. Glu-351–Ser-354 contributes to the ATP binding site. Ser-387 contacts L-serine.

Belongs to the class-II aminoacyl-tRNA synthetase family. Type-1 seryl-tRNA synthetase subfamily. In terms of assembly, homodimer. The tRNA molecule binds across the dimer.

The protein resides in the cytoplasm. The catalysed reaction is tRNA(Ser) + L-serine + ATP = L-seryl-tRNA(Ser) + AMP + diphosphate + H(+). It catalyses the reaction tRNA(Sec) + L-serine + ATP = L-seryl-tRNA(Sec) + AMP + diphosphate + H(+). Its pathway is aminoacyl-tRNA biosynthesis; selenocysteinyl-tRNA(Sec) biosynthesis; L-seryl-tRNA(Sec) from L-serine and tRNA(Sec): step 1/1. Catalyzes the attachment of serine to tRNA(Ser). Is also able to aminoacylate tRNA(Sec) with serine, to form the misacylated tRNA L-seryl-tRNA(Sec), which will be further converted into selenocysteinyl-tRNA(Sec). This is Serine--tRNA ligase from Buchnera aphidicola subsp. Acyrthosiphon pisum (strain 5A).